A 117-amino-acid polypeptide reads, in one-letter code: B-box domain protein 30 (117 aa).

The B box-type; atypical zinc-finger motif lies at 27–73; the sequence is KAPVSCELCGENATVYCEADAAFLCRKCDRWVHSANFLARRHLRRVI. The Zn(2+) site is built by C32, C35, C54, and H59. The short motif at 113 to 117 is the PFVFL element; that stretch reads PFVFL.

In terms of assembly, interacts with CO (via B-box) and with TPL (via PFVFL motif). As to expression, highly expressed in shoot apical meristems and in vascular tissues of leaves. Also detected in petioles.

It localises to the nucleus. Developmental regulator acting by forming heterodimeric complexes, that sequester CO and CO-like (COL) proteins into non-functional complexes. Engages CO and the transcriptional repressor TPL in a tripartite complex. Involved in the CO-mediated long-day flowering-promotion pathway. The protein is B-box domain protein 30 of Arabidopsis thaliana (Mouse-ear cress).